The following is a 309-amino-acid chain: Aspartate carbamoyltransferase catalytic subunit (309 aa).

Carbamoyl phosphate-binding residues include Arg-55 and Thr-56. Residue Lys-85 participates in L-aspartate binding. Carbamoyl phosphate contacts are provided by Arg-106, His-135, and Gln-138. Positions 168 and 230 each coordinate L-aspartate. Carbamoyl phosphate is bound by residues Leu-268 and Pro-269.

Belongs to the aspartate/ornithine carbamoyltransferase superfamily. ATCase family. Heterododecamer (2C3:3R2) of six catalytic PyrB chains organized as two trimers (C3), and six regulatory PyrI chains organized as three dimers (R2).

It carries out the reaction carbamoyl phosphate + L-aspartate = N-carbamoyl-L-aspartate + phosphate + H(+). Its pathway is pyrimidine metabolism; UMP biosynthesis via de novo pathway; (S)-dihydroorotate from bicarbonate: step 2/3. In terms of biological role, catalyzes the condensation of carbamoyl phosphate and aspartate to form carbamoyl aspartate and inorganic phosphate, the committed step in the de novo pyrimidine nucleotide biosynthesis pathway. The chain is Aspartate carbamoyltransferase catalytic subunit from Aliivibrio salmonicida (strain LFI1238) (Vibrio salmonicida (strain LFI1238)).